Here is a 412-residue protein sequence, read N- to C-terminus: Serine hydroxymethyltransferase (412 aa).

Residues Leu117 and 121–123 (GHL) contribute to the (6S)-5,6,7,8-tetrahydrofolate site. The residue at position 226 (Lys226) is an N6-(pyridoxal phosphate)lysine.

Belongs to the SHMT family. Homodimer. It depends on pyridoxal 5'-phosphate as a cofactor.

The protein localises to the cytoplasm. It catalyses the reaction (6R)-5,10-methylene-5,6,7,8-tetrahydrofolate + glycine + H2O = (6S)-5,6,7,8-tetrahydrofolate + L-serine. It functions in the pathway one-carbon metabolism; tetrahydrofolate interconversion. It participates in amino-acid biosynthesis; glycine biosynthesis; glycine from L-serine: step 1/1. Functionally, catalyzes the reversible interconversion of serine and glycine with tetrahydrofolate (THF) serving as the one-carbon carrier. This reaction serves as the major source of one-carbon groups required for the biosynthesis of purines, thymidylate, methionine, and other important biomolecules. Also exhibits THF-independent aldolase activity toward beta-hydroxyamino acids, producing glycine and aldehydes, via a retro-aldol mechanism. The sequence is that of Serine hydroxymethyltransferase from Natranaerobius thermophilus (strain ATCC BAA-1301 / DSM 18059 / JW/NM-WN-LF).